Here is a 218-residue protein sequence, read N- to C-terminus: ATP synthase subunit a (218 aa).

The next 5 membrane-spanning stretches (helical) occupy residues 17–37 (IYST…GIFL), 75–95 (YLPL…SWFI), 104–124 (DLST…IFGI), 162–184 (LFGN…PFLL), and 196–216 (GTIQ…NFVH).

It belongs to the ATPase A chain family. F-type ATPases have 2 components, CF(1) - the catalytic core - and CF(0) - the membrane proton channel. CF(1) has five subunits: alpha(3), beta(3), gamma(1), delta(1), epsilon(1). CF(0) has three main subunits: a(1), b(2) and c(9-12). The alpha and beta chains form an alternating ring which encloses part of the gamma chain. CF(1) is attached to CF(0) by a central stalk formed by the gamma and epsilon chains, while a peripheral stalk is formed by the delta and b chains. In this bacterium the a and b subunits are transcribed but do not seem to be translated, thus the ATP synthase consists of the alpha, beta, gamma, delta, epsilon and c subunits.

Its subcellular location is the cell membrane. Functionally, key component of the proton channel; it plays a direct role in the translocation of protons across the membrane. The chain is ATP synthase subunit a from Moorella thermoacetica (strain ATCC 39073 / JCM 9320).